Here is a 322-residue protein sequence, read N- to C-terminus: Arginase (322 aa).

Residues histidine 113, aspartate 141, histidine 143, and aspartate 145 each coordinate Mn(2+). Residues 143–147 (HADIN), 154–156 (SGN), and aspartate 200 each bind substrate. Positions 247 and 249 each coordinate Mn(2+). Positions 261 and 292 each coordinate substrate.

Belongs to the arginase family. As to quaternary structure, homotrimer. Mn(2+) is required as a cofactor.

The enzyme catalyses L-arginine + H2O = urea + L-ornithine. The protein operates within nitrogen metabolism; urea cycle; L-ornithine and urea from L-arginine: step 1/1. The polypeptide is Arginase (ARG) (Coccidioides immitis (strain RS) (Valley fever fungus)).